The following is a 415-amino-acid chain: MPKPLNNTENNLNTNRIKDLIKKYSPPFWVYDADIIYKKINLLRKFDVIRFAQKSCSNINILRLMKNKNVKIDAVSLGEIERALLSGFKPSTNEIIFTADILDEETLLKVAKYKIPVNAGSLDMLKQLGKISPGHHVWLRINPRFGYGHSKKTNTGGENSKHGIWHPEQAIPIIKKYKLKLIGLHMHIGSGVNYLHLKKVSQAMIKYAFQLNQKISSISVGGGLPIPYKFNDQPIDIKKYFMLWDIARKKISKFLGEKIELEIEPGRFLVAESGILISKVWATKKMGNKNFVLVDVGFNDLMRPTMYGSYHHISVIYGDDRKMNEKETIDTVVAGPLCESGDIFTQKEGGTVQTRKLPTIKVGDYLIFHDTGAYGAAMSSNYNTRPLIPEILLKNNDSIVIRRRQTIEEILNLEK.

Residue Lys-54 is modified to N6-(pyridoxal phosphate)lysine. Pyridoxal 5'-phosphate contacts are provided by residues Gly-223 and 264–267; that span reads EPGR. The substrate site is built by Arg-267, Arg-303, and Tyr-307. The active-site Proton donor is the Cys-338. Positions 339 and 374 each coordinate substrate. A pyridoxal 5'-phosphate-binding site is contributed by Tyr-374.

The protein belongs to the Orn/Lys/Arg decarboxylase class-II family. LysA subfamily. In terms of assembly, homodimer. It depends on pyridoxal 5'-phosphate as a cofactor.

It carries out the reaction meso-2,6-diaminopimelate + H(+) = L-lysine + CO2. Its pathway is amino-acid biosynthesis; L-lysine biosynthesis via DAP pathway; L-lysine from DL-2,6-diaminopimelate: step 1/1. Its function is as follows. Specifically catalyzes the decarboxylation of meso-diaminopimelate (meso-DAP) to L-lysine. This chain is Diaminopimelate decarboxylase, found in Buchnera aphidicola subsp. Acyrthosiphon pisum (strain APS) (Acyrthosiphon pisum symbiotic bacterium).